A 498-amino-acid chain; its full sequence is UDP-N-acetylmuramate--L-alanine ligase (498 aa).

133–139 (GSSGKTT) contributes to the ATP binding site.

It belongs to the MurCDEF family.

Its subcellular location is the cytoplasm. It catalyses the reaction UDP-N-acetyl-alpha-D-muramate + L-alanine + ATP = UDP-N-acetyl-alpha-D-muramoyl-L-alanine + ADP + phosphate + H(+). The protein operates within cell wall biogenesis; peptidoglycan biosynthesis. Functionally, cell wall formation. This is UDP-N-acetylmuramate--L-alanine ligase from Wolbachia pipientis wMel.